Consider the following 317-residue polypeptide: MAELACFCYPHLENDSYKFIPFNSLAIKCMLTAKVDKKDQDKFYNSIIYGIAPPPQFKKRYNTNDNSRGMNYETSMFNKVAILICEALNSIRVTQSDVANVLSRVVSVRHLENLVLRKENHQDVLFHSKELLLKAVLIAIGQSKEIETTATAEGGEIVFQNAAFTMWKLTYLDHKLMPILDQNFIEYKITLNEDKPISDICVKELVAELRWQYNRFAVITHGKGHYRVIKYSSVANHADRVFATYKNNAKSGNVTDFNLLDQRIIWQNWYAFTSSMKQGNTLDVCKKLLFQKMKQEKNPFKGLSTDRKMDEVSHVGI.

Residues 107 to 109, Lys188, and 221 to 223 each bind ATP; these read SVR and HGK. An RNA-binding region spans residues 205-241; the sequence is LVAELRWQYNRFAVITHGKGHYRVIKYSSVANHADRV. His225 acts as the For NTPase and RTPase activities in catalysis. Arg227 serves as a coordination point for ATP.

Belongs to the rotavirus NSP2 family. As to quaternary structure, homooctamer. Interacts with VP1; this interaction is weak. Interacts with NSP5; this interaction leads to up-regulation of NSP5 phosphorylation and formation of viral factories. Interacts with host DCP1A, DCP1B, DDX6, EDC4 and EIF2S1/eIF2-alpha; these interactions are probably part of the sequestration of some host SGs and PBs proteins in viral factories. Mg(2+) is required as a cofactor.

Its subcellular location is the host cytoplasm. Its function is as follows. Participates in replication and packaging of the viral genome. Plays a crucial role, together with NSP5, in the formation of virus factories (viroplasms), which are large inclusions in the host cytoplasm where replication intermediates are assembled and viral RNA replication takes place. Displays ssRNA binding, NTPase, RNA triphosphatase (RTPase) and ATP-independent helix-unwinding activities. The unwinding activity may prepare and organize plus-strand RNAs for packaging and replication by removing interfering secondary structures. The RTPase activity plays a role in the removal of the gamma-phosphate from the rotavirus RNA minus strands of dsRNA genome segments. Participates in the selective exclusion of host proteins from stress granules (SG) and P bodies (PB). Also participates in the sequestration of these remodeled organelles in viral factories. This chain is Non-structural protein 2, found in Homo sapiens (Human).